The following is a 701-amino-acid chain: Elongation factor G (701 aa).

In terms of domain architecture, tr-type G spans 8-290 (ARYRNIGISA…AVIEYLPAPT (283 aa)). GTP-binding positions include 17–24 (AHIDAGKT), 88–92 (DTPGH), and 142–145 (NKMD).

Belongs to the TRAFAC class translation factor GTPase superfamily. Classic translation factor GTPase family. EF-G/EF-2 subfamily.

The protein resides in the cytoplasm. Functionally, catalyzes the GTP-dependent ribosomal translocation step during translation elongation. During this step, the ribosome changes from the pre-translocational (PRE) to the post-translocational (POST) state as the newly formed A-site-bound peptidyl-tRNA and P-site-bound deacylated tRNA move to the P and E sites, respectively. Catalyzes the coordinated movement of the two tRNA molecules, the mRNA and conformational changes in the ribosome. This chain is Elongation factor G, found in Sodalis glossinidius (strain morsitans).